The primary structure comprises 764 residues: Hemocyte protein-glutamine gamma-glutamyltransferase (764 aa).

Active-site residues include C343, H402, and D425. Ca(2+) is bound by residues N465, D467, E522, and E527.

The protein belongs to the transglutaminase superfamily. Transglutaminase family. It depends on Ca(2+) as a cofactor. Mainly expressed in hemocytes, hepatopancreas, and gastric tissues. On the other hand nothing was detected in the heart, intestine and muscle.

It localises to the membrane. The catalysed reaction is L-glutaminyl-[protein] + L-lysyl-[protein] = [protein]-L-lysyl-N(6)-5-L-glutamyl-[protein] + NH4(+). Functionally, catalyzes the cross-linking of proteins and the conjugation of polyamines to proteins. This chain is Hemocyte protein-glutamine gamma-glutamyltransferase, found in Tachypleus tridentatus (Japanese horseshoe crab).